Reading from the N-terminus, the 305-residue chain is Tetraspanin-12 (305 aa).

The Cytoplasmic segment spans residues 1–12 (MAREDSVKCLRC). 2 S-palmitoyl cysteine lipidation sites follow: cysteine 9 and cysteine 12. Residues 13–33 (LLYALNLLFWLMSISVLAVSA) traverse the membrane as a helical segment. Residues 34-59 (WMRDYLNNVLTLTAETRVEEAVILTY) lie on the Extracellular side of the membrane. A helical transmembrane segment spans residues 60-80 (FPVVHPVMIAVCCFLIIVGML). Over 81 to 89 (GYCGTVKRN) the chain is Cytoplasmic. Cysteine 83 is lipidated: S-palmitoyl cysteine. Residues 90 to 110 (LLLLAWYFGSLLVIFCVELAC) form a helical membrane-spanning segment. Residues 111–224 (GVWTYEQELM…RGTKQLQVLR (114 aa)) lie on the Extracellular side of the membrane. Residues 225 to 245 (FLGISIGVTQILAMILTITLL) traverse the membrane as a helical segment. The Cytoplasmic portion of the chain corresponds to 246–305 (WALYYDRREPGTDQMMSLKNDNSQHLSCPSVELLKPSLSRIFEHTSMANSFNTHFEMEEL).

Belongs to the tetraspanin (TM4SF) family. In terms of assembly, component of a complex, at least composed of TSPAN12, FZD4 and norrin (NDP). Interacts (when palmitoylated) with ADAM10. Interacts with MMP14/MT1-MMP. In terms of processing, palmitoylated; required for interaction with ADAM10. The precise position of palmitoylated residues is unclear and occurs either on Cys-9, Cys-12 and/or Cys-83.

The protein resides in the cell membrane. Its function is as follows. Regulator of cell surface receptor signal transduction. Plays a central role in retinal vascularization by regulating norrin (NDP) signal transduction. Acts in concert with norrin (NDP) to promote FZD4 multimerization and subsequent activation of FZD4, leading to promote accumulation of beta-catenin (CTNNB1) and stimulate LEF/TCF-mediated transcriptional programs. Suprisingly, it only activates the norrin (NDP)-dependent activation of FZD4, while it does not activate the Wnt-dependent activation of FZD4, suggesting the existence of a Wnt-independent signaling that also promote accumulation the beta-catenin (CTNNB1). Acts as a regulator of membrane proteinases such as ADAM10 and MMP14/MT1-MMP. Activates ADAM10-dependent cleavage activity of amyloid precursor protein (APP). Activates MMP14/MT1-MMP-dependent cleavage activity. This Homo sapiens (Human) protein is Tetraspanin-12 (TSPAN12).